A 1041-amino-acid polypeptide reads, in one-letter code: MSWLRQGSSGGVASAGHSGNIRQRPIDAATDCDPRACYDSFCKHWQQAHEIIQHSAPPSHDDVLGVVSHLDYMVTLLLVELHHCNKVALPTTEASGPPAAPCLEYLLSENLLDKLYEWSCATGRYANAVRLEQLKLYELLVSHSRHQLLCHEPFLRPLLKILASSQGEIFPPDLEKRLVILLNQLCVVLMQNVHLLDLFFFSAQTQVQEQIQNGSVPPPKSGTTTNFIIFSLLIPYVHREGSLGHQARDALLLCMALSQKNSNIGTYIAQYSSICPLLVTGLGGLYSRLPNSIEISAIDWHRITPDDVTEIPELTLFMNALEFCNAVVQVAHEMIKQQLLDFMYQGFIVPVLGPAILQTLKGKHFQTNIDSQISAMSYLDLILRSITEPGLLRAFVRFLLDNEKFDGERILDALVERLNSPDANLCMVTLALFDTLLGLHCEDLMLELLLKFMLPGKHVPLSHRHKINKIDPYLSSSEFFLELSPDVMKRARDLAKPKAIQEHPVVGDIPSPVMSKTIGANWNYYGVHTGDSLYANIQAYLFEAHWRIAQCQKDCLKWANSYRYQKWPRHGQGRVQAHALDLARQFFSEYGGSGPVVASGETGEKQLDSLQSIGESSGYESFKWRPADEESEATETTLATTASEVELEHNSSSISSGLAASGRREPWRISHNNRNELVLTDLDFSEDLFAQGTVSLGPFLNAIWGKLQTFTSNSLYVNLHLTGLITRLAWYPLPLIHSLLLRSDIVITSDTPSFHQVLRILKQQIDAELPVTEDSLEIIDVARSSLIDREFRLVNTRKGNEGSPSHHNLQQQQALNPAQQQGQQRSAYATLSAATPVQATPTSAYDPFRRSDNKRRSISKSITSMFSRKSAPTAAASAAPANGSSASSGLSQIYAFFTGAASTLVGSNSSSESRGFAPGQQSAGTCETSLSTQPPRPTTIASGSSSNSSMGGSSQTLSAHSNATTTHSSSTLHGLDGGPPSFSSEPVSLDSVASMGIIASTSGTERSRDLALCAVLLDEWLKELAAIAQEQSVVLVTEQTL.

2 disordered regions span residues 797–856 (RKGN…NKRR) and 907–987 (SNSS…SEPV). Residue Ser-803 is modified to Phosphoserine. The span at 808–824 (NLQQQQALNPAQQQGQQ) shows a compositional bias: low complexity. Polar residues-rich tracts occupy residues 825–843 (RSAY…TPTS) and 907–933 (SNSS…LSTQ). Residues 942-973 (SGSSSNSSMGGSSQTLSAHSNATTTHSSSTLH) are compositionally biased toward low complexity.

Belongs to the FHIP family.

The polypeptide is FHIP family protein GF15501 (Drosophila ananassae (Fruit fly)).